Reading from the N-terminus, the 444-residue chain is Serine--tRNA ligase (444 aa).

243–245 contributes to the L-serine binding site; it reads TAE. Position 274 to 276 (274 to 276) interacts with ATP; it reads RSE. L-serine is bound at residue Glu297. Residue 361–364 participates in ATP binding; it reads EISS. Ser397 lines the L-serine pocket.

It belongs to the class-II aminoacyl-tRNA synthetase family. Type-1 seryl-tRNA synthetase subfamily. As to quaternary structure, homodimer. The tRNA molecule binds across the dimer.

Its subcellular location is the cytoplasm. The enzyme catalyses tRNA(Ser) + L-serine + ATP = L-seryl-tRNA(Ser) + AMP + diphosphate + H(+). The catalysed reaction is tRNA(Sec) + L-serine + ATP = L-seryl-tRNA(Sec) + AMP + diphosphate + H(+). Its pathway is aminoacyl-tRNA biosynthesis; selenocysteinyl-tRNA(Sec) biosynthesis; L-seryl-tRNA(Sec) from L-serine and tRNA(Sec): step 1/1. Catalyzes the attachment of serine to tRNA(Ser). Is also able to aminoacylate tRNA(Sec) with serine, to form the misacylated tRNA L-seryl-tRNA(Sec), which will be further converted into selenocysteinyl-tRNA(Sec). In Acidobacterium capsulatum (strain ATCC 51196 / DSM 11244 / BCRC 80197 / JCM 7670 / NBRC 15755 / NCIMB 13165 / 161), this protein is Serine--tRNA ligase.